Reading from the N-terminus, the 618-residue chain is ADP,ATP carrier protein 2, chloroplastic (618 aa).

The N-terminal 76 residues, 1–76 (MEGLIQTRGI…KERSRGFICK (76 aa)), are a transit peptide targeting the chloroplast. Position 77 is an N-acetylalanine (alanine 77). 11 consecutive transmembrane segments (helical) span residues 110–130 (LKKI…YTIL), 148–168 (IIPF…MLLY), 179–199 (ALFY…GFVM), 237–257 (LFYV…FWGF), 270–289 (FYPL…GRTV), 312–332 (AMMS…WWVN), 368–388 (LATL…TWKS), 401–421 (SAFM…MMLL), 441–461 (VLLL…PFAP), 464–484 (AKLG…QNIF), and 542–562 (LANS…AWLA). Residues 586–618 (RASSVKIPVVSQEDAPSGETTSQLSEKSTPTGI) are disordered. Polar residues predominate over residues 603–618 (GETTSQLSEKSTPTGI).

It belongs to the ADP/ATP translocase tlc (TC 2.A.12.2) family.

It is found in the plastid. The protein resides in the chloroplast membrane. In Arabidopsis thaliana (Mouse-ear cress), this protein is ADP,ATP carrier protein 2, chloroplastic (AATP2).